A 266-amino-acid polypeptide reads, in one-letter code: Putative pyruvate, phosphate dikinase regulatory protein (266 aa).

149-156 (GVSRTSKT) lines the ADP pocket.

It belongs to the pyruvate, phosphate/water dikinase regulatory protein family. PDRP subfamily.

The enzyme catalyses N(tele)-phospho-L-histidyl/L-threonyl-[pyruvate, phosphate dikinase] + ADP = N(tele)-phospho-L-histidyl/O-phospho-L-threonyl-[pyruvate, phosphate dikinase] + AMP + H(+). It carries out the reaction N(tele)-phospho-L-histidyl/O-phospho-L-threonyl-[pyruvate, phosphate dikinase] + phosphate + H(+) = N(tele)-phospho-L-histidyl/L-threonyl-[pyruvate, phosphate dikinase] + diphosphate. Functionally, bifunctional serine/threonine kinase and phosphorylase involved in the regulation of the pyruvate, phosphate dikinase (PPDK) by catalyzing its phosphorylation/dephosphorylation. The protein is Putative pyruvate, phosphate dikinase regulatory protein of Geobacillus kaustophilus (strain HTA426).